Here is a 157-residue protein sequence, read N- to C-terminus: Peptide methionine sulfoxide reductase MsrA (157 aa).

Cys-10 is an active-site residue.

This sequence belongs to the MsrA Met sulfoxide reductase family.

It carries out the reaction L-methionyl-[protein] + [thioredoxin]-disulfide + H2O = L-methionyl-(S)-S-oxide-[protein] + [thioredoxin]-dithiol. The enzyme catalyses [thioredoxin]-disulfide + L-methionine + H2O = L-methionine (S)-S-oxide + [thioredoxin]-dithiol. In terms of biological role, has an important function as a repair enzyme for proteins that have been inactivated by oxidation. Catalyzes the reversible oxidation-reduction of methionine sulfoxide in proteins to methionine. This Clostridium perfringens (strain 13 / Type A) protein is Peptide methionine sulfoxide reductase MsrA.